Here is a 268-residue protein sequence, read N- to C-terminus: Hydroxyethylthiazole kinase (268 aa).

Methionine 44 contributes to the substrate binding site. The ATP site is built by arginine 119 and serine 165. Residue glycine 192 coordinates substrate.

This sequence belongs to the Thz kinase family. Mg(2+) is required as a cofactor.

The catalysed reaction is 5-(2-hydroxyethyl)-4-methylthiazole + ATP = 4-methyl-5-(2-phosphooxyethyl)-thiazole + ADP + H(+). The protein operates within cofactor biosynthesis; thiamine diphosphate biosynthesis; 4-methyl-5-(2-phosphoethyl)-thiazole from 5-(2-hydroxyethyl)-4-methylthiazole: step 1/1. Its function is as follows. Catalyzes the phosphorylation of the hydroxyl group of 4-methyl-5-beta-hydroxyethylthiazole (THZ). This chain is Hydroxyethylthiazole kinase, found in Corynebacterium glutamicum (strain R).